A 101-amino-acid chain; its full sequence is Small ribosomal subunit protein uS14 (101 aa).

Belongs to the universal ribosomal protein uS14 family. In terms of assembly, part of the 30S ribosomal subunit. Contacts proteins S3 and S10.

Its function is as follows. Binds 16S rRNA, required for the assembly of 30S particles and may also be responsible for determining the conformation of the 16S rRNA at the A site. This is Small ribosomal subunit protein uS14 from Cereibacter sphaeroides (strain ATCC 17029 / ATH 2.4.9) (Rhodobacter sphaeroides).